The sequence spans 507 residues: Fumarate hydratase, mitochondrial (507 aa).

The transit peptide at 1–41 (MYRALRLLARSRRLLRVPSAGAAVSGEATTLPRCAPNVARM) directs the protein to the mitochondrion. Residues lysine 58, lysine 63, and lysine 77 each carry the N6-acetyllysine; alternate modification. Residues lysine 58, lysine 63, and lysine 77 each carry the N6-succinyllysine; alternate modification. Threonine 82 is subject to Phosphothreonine. Lysine 112 and lysine 119 each carry N6-acetyllysine; alternate. N6-succinyllysine; alternate occurs at positions 112 and 119. Substrate-binding positions include 142-144 (SGT), 173-176 (HPND), and 183-185 (SSN). An N6-acetyllysine modification is found at lysine 210. Lysine 220 carries the N6-acetyllysine; alternate modification. Lysine 220 is modified (N6-succinyllysine; alternate). Threonine 231 serves as a coordination point for substrate. Histidine 232 (proton donor/acceptor) is an active-site residue. The residue at position 233 (threonine 233) is a Phosphothreonine. Lysine 289 carries the post-translational modification N6-acetyllysine; alternate. N6-succinyllysine; alternate is present on lysine 289. Residue serine 362 is part of the active site. Residues serine 363 and 368–370 (KVN) contribute to the substrate site. Serine 363 bears the Phosphoserine mark. N6-succinyllysine occurs at positions 464 and 470. Position 499 is an N6-acetyllysine (lysine 499).

Belongs to the class-II fumarase/aspartase family. Fumarase subfamily. As to quaternary structure, homotetramer. Interacts with H2AZ1. In terms of processing, phosphorylation at Thr-233 by PRKDC in response to DNA damage promotes translocation to the nucleus and recruitment to DNA double-strand breaks (DSBs).

Its subcellular location is the mitochondrion. The protein localises to the cytoplasm. It is found in the cytosol. It localises to the nucleus. The protein resides in the chromosome. The enzyme catalyses (S)-malate = fumarate + H2O. It functions in the pathway carbohydrate metabolism; tricarboxylic acid cycle; (S)-malate from fumarate: step 1/1. Functionally, catalyzes the reversible stereospecific interconversion of fumarate to L-malate. Experiments in different species have demonstrated that specific isoforms of this protein act in defined pathways and favor one direction over the other. In terms of biological role, catalyzes the hydration of fumarate to L-malate in the tricarboxylic acid (TCA) cycle to facilitate a transition step in the production of energy in the form of NADH. Catalyzes the dehydration of L-malate to fumarate. Fumarate metabolism in the cytosol plays a role during urea cycle and arginine metabolism; fumarate being a by-product of the urea cycle and amino-acid catabolism. Also plays a role in DNA repair by promoting non-homologous end-joining (NHEJ). In response to DNA damage and phosphorylation by PRKDC, translocates to the nucleus and accumulates at DNA double-strand breaks (DSBs): acts by catalyzing formation of fumarate, an inhibitor of KDM2B histone demethylase activity, resulting in enhanced dimethylation of histone H3 'Lys-36' (H3K36me2). The polypeptide is Fumarate hydratase, mitochondrial (Mus musculus (Mouse)).